Reading from the N-terminus, the 384-residue chain is Spermidine/putrescine import ATP-binding protein PotA (384 aa).

In terms of domain architecture, ABC transporter spans 6–238 (ITFNNVSKTF…PINHFVANFI (233 aa)). Residue 40 to 47 (GASGSGKS) participates in ATP binding.

Belongs to the ABC transporter superfamily. Spermidine/putrescine importer (TC 3.A.1.11.1) family. The complex is composed of two ATP-binding proteins (PotA), two transmembrane proteins (PotB and PotC) and a solute-binding protein (PotD).

It localises to the cell membrane. It carries out the reaction ATP + H2O + polyamine-[polyamine-binding protein]Side 1 = ADP + phosphate + polyamineSide 2 + [polyamine-binding protein]Side 1.. In terms of biological role, part of the ABC transporter complex PotABCD involved in spermidine/putrescine import. Responsible for energy coupling to the transport system. The protein is Spermidine/putrescine import ATP-binding protein PotA of Streptococcus pyogenes serotype M28 (strain MGAS6180).